The primary structure comprises 140 residues: GTP-dependent dephospho-CoA kinase (140 aa).

Residues Asp-21, Val-22, Val-23, Asp-40, Lys-42, and Glu-92 each coordinate GTP.

The protein belongs to the GTP-dependent DPCK family.

The enzyme catalyses 3'-dephospho-CoA + GTP = GDP + CoA + H(+). It participates in cofactor biosynthesis; coenzyme A biosynthesis. Its function is as follows. Catalyzes the GTP-dependent phosphorylation of the 3'-hydroxyl group of dephosphocoenzyme A to form coenzyme A (CoA). The polypeptide is GTP-dependent dephospho-CoA kinase (Pyrobaculum aerophilum (strain ATCC 51768 / DSM 7523 / JCM 9630 / CIP 104966 / NBRC 100827 / IM2)).